Here is a 599-residue protein sequence, read N- to C-terminus: Aspartate--tRNA(Asp/Asn) ligase (599 aa).

Glu-174 serves as a coordination point for L-aspartate. The tract at residues 198-201 (QLFK) is aspartate. Arg-220 serves as a coordination point for L-aspartate. ATP contacts are provided by residues 220 to 222 (RDE) and Gln-229. His-457 provides a ligand contact to L-aspartate. Glu-491 provides a ligand contact to ATP. Position 498 (Arg-498) interacts with L-aspartate. 543–546 (GLDR) contributes to the ATP binding site.

Belongs to the class-II aminoacyl-tRNA synthetase family. Type 1 subfamily. Homodimer.

The protein localises to the cytoplasm. It carries out the reaction tRNA(Asx) + L-aspartate + ATP = L-aspartyl-tRNA(Asx) + AMP + diphosphate. Aspartyl-tRNA synthetase with relaxed tRNA specificity since it is able to aspartylate not only its cognate tRNA(Asp) but also tRNA(Asn). Reaction proceeds in two steps: L-aspartate is first activated by ATP to form Asp-AMP and then transferred to the acceptor end of tRNA(Asp/Asn). This chain is Aspartate--tRNA(Asp/Asn) ligase, found in Paraburkholderia phymatum (strain DSM 17167 / CIP 108236 / LMG 21445 / STM815) (Burkholderia phymatum).